The following is a 396-amino-acid chain: Ribosomal RNA large subunit methyltransferase I (396 aa).

The PUA domain occupies 2 to 79 (SVRLVLAKGR…QAESIDIAFF (78 aa)).

The protein belongs to the methyltransferase superfamily. RlmI family.

It is found in the cytoplasm. The catalysed reaction is cytidine(1962) in 23S rRNA + S-adenosyl-L-methionine = 5-methylcytidine(1962) in 23S rRNA + S-adenosyl-L-homocysteine + H(+). Its function is as follows. Specifically methylates the cytosine at position 1962 (m5C1962) of 23S rRNA. This Citrobacter koseri (strain ATCC BAA-895 / CDC 4225-83 / SGSC4696) protein is Ribosomal RNA large subunit methyltransferase I.